Reading from the N-terminus, the 229-residue chain is 2-C-methyl-D-erythritol 4-phosphate cytidylyltransferase (229 aa).

Belongs to the IspD/TarI cytidylyltransferase family. IspD subfamily.

It catalyses the reaction 2-C-methyl-D-erythritol 4-phosphate + CTP + H(+) = 4-CDP-2-C-methyl-D-erythritol + diphosphate. The protein operates within isoprenoid biosynthesis; isopentenyl diphosphate biosynthesis via DXP pathway; isopentenyl diphosphate from 1-deoxy-D-xylulose 5-phosphate: step 2/6. Catalyzes the formation of 4-diphosphocytidyl-2-C-methyl-D-erythritol from CTP and 2-C-methyl-D-erythritol 4-phosphate (MEP). The protein is 2-C-methyl-D-erythritol 4-phosphate cytidylyltransferase of Clostridium botulinum (strain Okra / Type B1).